Consider the following 148-residue polypeptide: Cytochrome c-type biogenesis protein CcmE (148 aa).

The Cytoplasmic segment spans residues 1–7 (MKPRNRR). The helical; Signal-anchor for type II membrane protein transmembrane segment at 8 to 28 (IALIVAGLSALGIATALVLNA) threads the bilayer. Topologically, residues 29–148 (FQSNLVFFFT…VQKKPASRKP (120 aa)) are periplasmic. Residues histidine 123 and tyrosine 127 each coordinate heme. Residues 128-148 (MPPEAQHALDEVQKKPASRKP) form a disordered region.

The protein belongs to the CcmE/CycJ family.

Its subcellular location is the cell inner membrane. Heme chaperone required for the biogenesis of c-type cytochromes. Transiently binds heme delivered by CcmC and transfers the heme to apo-cytochromes in a process facilitated by CcmF and CcmH. The protein is Cytochrome c-type biogenesis protein CcmE of Pseudomonas aeruginosa.